A 689-amino-acid chain; its full sequence is Glycine--tRNA ligase beta subunit (689 aa).

It belongs to the class-II aminoacyl-tRNA synthetase family. In terms of assembly, tetramer of two alpha and two beta subunits.

It is found in the cytoplasm. It catalyses the reaction tRNA(Gly) + glycine + ATP = glycyl-tRNA(Gly) + AMP + diphosphate. The sequence is that of Glycine--tRNA ligase beta subunit from Erwinia tasmaniensis (strain DSM 17950 / CFBP 7177 / CIP 109463 / NCPPB 4357 / Et1/99).